A 567-amino-acid polypeptide reads, in one-letter code: Hydroxylamine reductase 2 (567 aa).

Cys-5, Cys-8, Cys-17, and Cys-23 together coordinate [4Fe-4S] cluster. Hybrid [4Fe-2O-2S] cluster contacts are provided by His-262, Glu-286, Cys-330, Cys-421, Cys-449, Cys-474, Glu-509, and Lys-511. Cys-421 is subject to Cysteine persulfide.

The protein belongs to the HCP family. [4Fe-4S] cluster serves as cofactor. It depends on hybrid [4Fe-2O-2S] cluster as a cofactor.

The protein localises to the cytoplasm. It catalyses the reaction A + NH4(+) + H2O = hydroxylamine + AH2 + H(+). In terms of biological role, catalyzes the reduction of hydroxylamine to form NH(3) and H(2)O. The chain is Hydroxylamine reductase 2 from Clostridium acetobutylicum (strain ATCC 824 / DSM 792 / JCM 1419 / IAM 19013 / LMG 5710 / NBRC 13948 / NRRL B-527 / VKM B-1787 / 2291 / W).